The sequence spans 209 residues: Large ribosomal subunit protein uL4 (209 aa).

The interval 46-76 (RGTASTKTRGEVSGGGRKPWRQKGTGRARHG) is disordered. Over residues 63–76 (KPWRQKGTGRARHG) the composition is skewed to basic residues.

This sequence belongs to the universal ribosomal protein uL4 family. In terms of assembly, part of the 50S ribosomal subunit.

One of the primary rRNA binding proteins, this protein initially binds near the 5'-end of the 23S rRNA. It is important during the early stages of 50S assembly. It makes multiple contacts with different domains of the 23S rRNA in the assembled 50S subunit and ribosome. In terms of biological role, forms part of the polypeptide exit tunnel. This chain is Large ribosomal subunit protein uL4, found in Halothermothrix orenii (strain H 168 / OCM 544 / DSM 9562).